A 119-amino-acid polypeptide reads, in one-letter code: Large ribosomal subunit protein uL14 (119 aa).

It belongs to the universal ribosomal protein uL14 family. In terms of assembly, part of the 50S ribosomal subunit. Forms a cluster with proteins L3 and L19. In the 70S ribosome, L14 and L19 interact and together make contacts with the 16S rRNA in bridges B5 and B8.

Its function is as follows. Binds to 23S rRNA. Forms part of two intersubunit bridges in the 70S ribosome. This Ehrlichia ruminantium (strain Gardel) protein is Large ribosomal subunit protein uL14.